Consider the following 467-residue polypeptide: UDP-N-acetylmuramate--L-alanine ligase (467 aa).

Residue 114–120 (GTHGKTT) participates in ATP binding.

Belongs to the MurCDEF family.

The protein resides in the cytoplasm. The enzyme catalyses UDP-N-acetyl-alpha-D-muramate + L-alanine + ATP = UDP-N-acetyl-alpha-D-muramoyl-L-alanine + ADP + phosphate + H(+). The protein operates within cell wall biogenesis; peptidoglycan biosynthesis. Its function is as follows. Cell wall formation. This is UDP-N-acetylmuramate--L-alanine ligase from Rhodopseudomonas palustris (strain ATCC BAA-98 / CGA009).